A 347-amino-acid polypeptide reads, in one-letter code: GTPase Obg (347 aa).

Positions 1-159 constitute an Obg domain; the sequence is MHFIDQAEIE…VRLRLELKLI (159 aa). An OBG-type G domain is found at 160-328; sequence AEVGIVGLPN…LLQRVWQCLG (169 aa). Residues 166 to 173, 191 to 195, 213 to 216, 280 to 283, and 309 to 311 contribute to the GTP site; these read GLPNAGKS, FTTLQ, DIPG, NKID, and SAI. Positions 173 and 193 each coordinate Mg(2+).

Belongs to the TRAFAC class OBG-HflX-like GTPase superfamily. OBG GTPase family. Monomer. Requires Mg(2+) as cofactor.

Its subcellular location is the cytoplasm. In terms of biological role, an essential GTPase which binds GTP, GDP and possibly (p)ppGpp with moderate affinity, with high nucleotide exchange rates and a fairly low GTP hydrolysis rate. Plays a role in control of the cell cycle, stress response, ribosome biogenesis and in those bacteria that undergo differentiation, in morphogenesis control. The polypeptide is GTPase Obg (Synechococcus sp. (strain JA-2-3B'a(2-13)) (Cyanobacteria bacterium Yellowstone B-Prime)).